We begin with the raw amino-acid sequence, 226 residues long: EEF1A lysine methyltransferase 1 (226 aa).

Position 2 is an N-acetylserine (Ser-2). Ser-2 carries the post-translational modification Phosphoserine.

The protein belongs to the class I-like SAM-binding methyltransferase superfamily. EFM5 family.

The protein localises to the cytoplasm. It carries out the reaction L-lysyl-[protein] + 3 S-adenosyl-L-methionine = N(6),N(6),N(6)-trimethyl-L-lysyl-[protein] + 3 S-adenosyl-L-homocysteine + 3 H(+). In terms of biological role, protein-lysine methyltransferase that selectively catalyzes the trimethylation of EEF1A at 'Lys-79'. This Bos taurus (Bovine) protein is EEF1A lysine methyltransferase 1.